The chain runs to 350 residues: Phosphotriesterase-related protein (350 aa).

Positions 22, 24, 169, 201, 230, and 298 each coordinate a divalent metal cation.

It belongs to the metallo-dependent hydrolases superfamily. Phosphotriesterase family. The cofactor is a divalent metal cation.

This Drosophila persimilis (Fruit fly) protein is Phosphotriesterase-related protein.